The following is a 122-amino-acid chain: Large ribosomal subunit protein bL12 (122 aa).

The protein belongs to the bacterial ribosomal protein bL12 family. In terms of assembly, homodimer. Part of the ribosomal stalk of the 50S ribosomal subunit. Forms a multimeric L10(L12)X complex, where L10 forms an elongated spine to which 2 to 4 L12 dimers bind in a sequential fashion. Binds GTP-bound translation factors.

Functionally, forms part of the ribosomal stalk which helps the ribosome interact with GTP-bound translation factors. Is thus essential for accurate translation. The protein is Large ribosomal subunit protein bL12 of Pseudomonas aeruginosa (strain LESB58).